The primary structure comprises 466 residues: 3-isopropylmalate dehydratase large subunit (466 aa).

[4Fe-4S] cluster contacts are provided by Cys-347, Cys-407, and Cys-410.

It belongs to the aconitase/IPM isomerase family. LeuC type 1 subfamily. In terms of assembly, heterodimer of LeuC and LeuD. [4Fe-4S] cluster serves as cofactor.

It carries out the reaction (2R,3S)-3-isopropylmalate = (2S)-2-isopropylmalate. It functions in the pathway amino-acid biosynthesis; L-leucine biosynthesis; L-leucine from 3-methyl-2-oxobutanoate: step 2/4. Catalyzes the isomerization between 2-isopropylmalate and 3-isopropylmalate, via the formation of 2-isopropylmaleate. The chain is 3-isopropylmalate dehydratase large subunit from Shewanella loihica (strain ATCC BAA-1088 / PV-4).